The sequence spans 257 residues: NH(3)-dependent NAD(+) synthetase (257 aa).

Residue 32–39 (GLSGGVDS) coordinates ATP. Asp-38 contacts Mg(2+). Arg-113 contributes to the deamido-NAD(+) binding site. Residue Thr-133 participates in ATP binding. Glu-138 serves as a coordination point for Mg(2+). Residues Lys-162 and Ser-184 each coordinate ATP.

It belongs to the NAD synthetase family. Homodimer.

The catalysed reaction is deamido-NAD(+) + NH4(+) + ATP = AMP + diphosphate + NAD(+) + H(+). It participates in cofactor biosynthesis; NAD(+) biosynthesis; NAD(+) from deamido-NAD(+) (ammonia route): step 1/1. In terms of biological role, catalyzes the ATP-dependent amidation of deamido-NAD to form NAD. Uses ammonia as a nitrogen source. The polypeptide is NH(3)-dependent NAD(+) synthetase (Wolinella succinogenes (strain ATCC 29543 / DSM 1740 / CCUG 13145 / JCM 31913 / LMG 7466 / NCTC 11488 / FDC 602W) (Vibrio succinogenes)).